Consider the following 178-residue polypeptide: VIVGTPPISPNWPAIKDLLHLKFKTEITSSPLFCGYYLSPAGCIRNPLAHFAKLMTCVDDMSLPEKVLSYLSEVSIGHNLGDQIIQHLPPHLIQYQSACFDFFCRNCTPSQKLLLSNDPIPESKLLALVHKIKWASKAFFSELPQKAREFLVSKSSLPSFPNNPKVSELESELLHFSQ.

This sequence belongs to the tymovirus NS35 RNA replicase polyprotein family.

The enzyme catalyses RNA(n) + a ribonucleoside 5'-triphosphate = RNA(n+1) + diphosphate. This Physalis heterophylla (PhMV) protein is RNA replicase polyprotein.